The following is a 33-amino-acid chain: Putative tumor antigen NA88-A (33 aa).

In terms of tissue distribution, expressed in testis and melanoma cell lines.

The protein is Putative tumor antigen NA88-A (VENTXP1) of Homo sapiens (Human).